Here is a 245-residue protein sequence, read N- to C-terminus: Flavin-dependent thymidylate synthase (245 aa).

One can recognise a ThyX domain in the interval 5–210; sequence IKVRLVNYTK…ELRPIIRWAK (206 aa). Residues S59, 83–85, and Q91 contribute to the FAD site; that span reads RHR. Residues 80–83, 91–95, and R149 contribute to the dUMP site; these read QLVR and QQSMR. Positions 83-93 match the ThyX motif motif; it reads RHRIASYTQQS. Residues 165 to 167 and H171 each bind FAD; that span reads NLR. R176 is a binding site for dUMP. R176 (involved in ionization of N3 of dUMP, leading to its activation) is an active-site residue.

Belongs to the thymidylate synthase ThyX family. In terms of assembly, homotetramer. The cofactor is FAD.

It carries out the reaction dUMP + (6R)-5,10-methylene-5,6,7,8-tetrahydrofolate + NADPH + H(+) = dTMP + (6S)-5,6,7,8-tetrahydrofolate + NADP(+). It participates in pyrimidine metabolism; dTTP biosynthesis. In terms of biological role, catalyzes the reductive methylation of 2'-deoxyuridine-5'-monophosphate (dUMP) to 2'-deoxythymidine-5'-monophosphate (dTMP) while utilizing 5,10-methylenetetrahydrofolate (mTHF) as the methyl donor, and NADPH and FADH(2) as the reductant. This chain is Flavin-dependent thymidylate synthase, found in Thermococcus onnurineus (strain NA1).